Reading from the N-terminus, the 607-residue chain is uncharacterized protein (607 aa).

This is an uncharacterized protein from Ictalurid herpesvirus 1 (strain Auburn) (IcHV-1).